The chain runs to 94 residues: Small ribosomal subunit protein eS24 (94 aa).

This sequence belongs to the eukaryotic ribosomal protein eS24 family.

This Nanoarchaeum equitans (strain Kin4-M) protein is Small ribosomal subunit protein eS24.